Here is a 548-residue protein sequence, read N- to C-terminus: Non-structural protein NS1 (548 aa).

This sequence belongs to the orbivirus non-structural protein NS1 family.

This African horse sickness virus (AHSV) protein is Non-structural protein NS1 (Segment-5).